A 765-amino-acid polypeptide reads, in one-letter code: DNA ligase (765 aa).

Residues 1–34 (MAGDDEDRAVPAAEGAPPPSALPPVSGLDVKAAE) form a disordered region. Residues 61 to 65 (DAEYD), 110 to 111 (SL), and Glu144 contribute to the NAD(+) site. The active-site N6-AMP-lysine intermediate is Lys146. The NAD(+) site is built by Arg167, Glu204, Lys317, and Lys341. Residues Cys446, Cys449, Cys464, and Cys470 each contribute to the Zn(2+) site. The BRCT domain maps to 687 to 765 (ATDSAIAGKT…EDEWLAIAQG (79 aa)).

This sequence belongs to the NAD-dependent DNA ligase family. LigA subfamily. Mg(2+) is required as a cofactor. Requires Mn(2+) as cofactor.

It carries out the reaction NAD(+) + (deoxyribonucleotide)n-3'-hydroxyl + 5'-phospho-(deoxyribonucleotide)m = (deoxyribonucleotide)n+m + AMP + beta-nicotinamide D-nucleotide.. In terms of biological role, DNA ligase that catalyzes the formation of phosphodiester linkages between 5'-phosphoryl and 3'-hydroxyl groups in double-stranded DNA using NAD as a coenzyme and as the energy source for the reaction. It is essential for DNA replication and repair of damaged DNA. This Paracoccus denitrificans (strain Pd 1222) protein is DNA ligase.